A 338-amino-acid chain; its full sequence is Mitochondrial amidoxime reducing component 2 (338 aa).

The transit peptide at 1-35 (MGSSSSTALARLGLPGQPRSTWLGVAALGLAAVAL) directs the protein to the mitochondrion. Residues Lys-59, Lys-138, and Lys-144 each participate in a glycyl lysine isopeptide (Lys-Gly) (interchain with G-Cter in ubiquitin) cross-link. Position 156 is an N6-acetyllysine; alternate (Lys-156). Lys-156 participates in a covalent cross-link: Glycyl lysine isopeptide (Lys-Gly) (interchain with G-Cter in ubiquitin); alternate. Glycyl lysine isopeptide (Lys-Gly) (interchain with G-Cter in ubiquitin) cross-links involve residues Lys-173, Lys-187, Lys-289, and Lys-296. Residues 188–336 (GRTTKKLYPS…LRVGDPVYRM (149 aa)) form the MOSC domain.

As to quaternary structure, component of a complex composed of cytochrome b5, NADH-cytochrome b5 reductase (CYB5R3) and MTARC2. Mo-molybdopterin is required as a cofactor. Ubiquitinated by PRKN during mitophagy, leading to its degradation and enhancement of mitophagy. Deubiquitinated by USP30.

It localises to the mitochondrion outer membrane. Its subcellular location is the peroxisome. The enzyme catalyses N(omega)-hydroxy-L-arginine + 2 Fe(II)-[cytochrome b5] + 2 H(+) = L-arginine + 2 Fe(III)-[cytochrome b5] + H2O. Its function is as follows. Catalyzes the reduction of N-oxygenated molecules, acting as a counterpart of cytochrome P450 and flavin-containing monooxygenases in metabolic cycles. As a component of prodrug-converting system, reduces a multitude of N-hydroxylated prodrugs particularly amidoximes, leading to increased drug bioavailability. May be involved in mitochondrial N(omega)-hydroxy-L-arginine (NOHA) reduction, regulating endogenous nitric oxide levels and biosynthesis. Postulated to cleave the N-OH bond of N-hydroxylated substrates in concert with electron transfer from NADH to cytochrome b5 reductase then to cytochrome b5, the ultimate electron donor that primes the active site for substrate reduction. The polypeptide is Mitochondrial amidoxime reducing component 2 (Mtarc2) (Rattus norvegicus (Rat)).